We begin with the raw amino-acid sequence, 608 residues long: Threonine--tRNA ligase (608 aa).

Residues 1–145 (MKTLLIHAKH…TIKPGRRVRP (145 aa)) are editing domain. Catalytic regions lie at residues 192-489 (PKYL…PSLP) and 193-489 (KYLE…PSLP). Cys286, His337, and His458 together coordinate Zn(2+).

The protein belongs to the class-II aminoacyl-tRNA synthetase family. In terms of assembly, homodimer. Zn(2+) serves as cofactor.

The protein resides in the cytoplasm. The catalysed reaction is tRNA(Thr) + L-threonine + ATP = L-threonyl-tRNA(Thr) + AMP + diphosphate + H(+). Its function is as follows. Catalyzes the attachment of threonine to tRNA(Thr) in a two-step reaction: L-threonine is first activated by ATP to form Thr-AMP and then transferred to the acceptor end of tRNA(Thr). Also edits incorrectly charged L-seryl-tRNA(Thr). The polypeptide is Threonine--tRNA ligase (Thermofilum pendens (strain DSM 2475 / Hrk 5)).